The following is a 185-amino-acid chain: Thymidine kinase (185 aa).

Residue 8-15 (GPMYSGKT) coordinates ATP. Glu-85 acts as the Proton acceptor in catalysis. Residue Phe-117 coordinates substrate. 2 residues coordinate Zn(2+): Cys-142 and Cys-145. 161-165 (IIEIG) lines the substrate pocket. Zn(2+)-binding residues include Cys-174 and Cys-177.

It belongs to the thymidine kinase family.

The catalysed reaction is thymidine + ATP = dTMP + ADP + H(+). The chain is Thymidine kinase (TK) from Choristoneura fumiferana entomopoxvirus (CfEPV).